A 315-amino-acid chain; its full sequence is MRNSVEFSQLGLKTAFNLSQNKTYTSAVKKQFFSTGAFLSNGGNIDLNKHTQKNIDSKYVACNSRSVTPPNDVASSVSKNTLRHKQRLMMAQWLMSPEVQKAKSSSSGNVGLGPNTNQPFPLNPFFKPPRPISHSLRMKITDEYLQGASIEVLARKFNTSPQRIEALIKLRRINDEFEEKKKPILHSYNEVMEKMLNACTKPEMMQFNDGNDIPLRSNPVSLWKSLPEGETFTPQEAAKILKWPSIEELNMRQNATHFHKTSDEHKDLNEDEELISSSPSEVGKRVFRLIDLSTGNVYRRDTGGDIYVKRKKSTT.

The N-terminal 66 residues, 1–66, are a transit peptide targeting the mitochondrion; that stretch reads MRNSVEFSQL…SKYVACNSRS (66 aa).

The protein belongs to the mitochondrion-specific ribosomal protein mS45 family. Component of the mitochondrial small ribosomal subunit (mt-SSU). Mature yeast 74S mitochondrial ribosomes consist of a small (37S) and a large (54S) subunit. The 37S small subunit contains a 15S ribosomal RNA (15S mt-rRNA) and at least 32 different proteins. The 54S large subunit contains a 21S rRNA (21S mt-rRNA) and at least 45 different proteins.

Its subcellular location is the mitochondrion. Functionally, component of the mitochondrial ribosome (mitoribosome), a dedicated translation machinery responsible for the synthesis of mitochondrial genome-encoded proteins, including at least some of the essential transmembrane subunits of the mitochondrial respiratory chain. The mitoribosomes are attached to the mitochondrial inner membrane and translation products are cotranslationally integrated into the membrane. Required for mitochondrial protein synthesis. Has a role in mitochondrial integrity and cell respiration. The chain is Small ribosomal subunit protein mS45 (bot1) from Schizosaccharomyces pombe (strain 972 / ATCC 24843) (Fission yeast).